The following is a 181-amino-acid chain: Large ribosomal subunit protein uL16 (181 aa).

This sequence belongs to the universal ribosomal protein uL16 family.

This chain is Large ribosomal subunit protein uL16, found in Pyrococcus abyssi (strain GE5 / Orsay).